The sequence spans 307 residues: Small ribosomal subunit biogenesis GTPase RsgA (307 aa).

One can recognise a CP-type G domain in the interval glycine 82–valine 240. Residues asparagine 131–aspartate 134 and glycine 182–serine 190 contribute to the GTP site. Positions 264, 269, 271, and 277 each coordinate Zn(2+).

The protein belongs to the TRAFAC class YlqF/YawG GTPase family. RsgA subfamily. As to quaternary structure, monomer. Associates with 30S ribosomal subunit, binds 16S rRNA. Zn(2+) serves as cofactor.

The protein resides in the cytoplasm. One of several proteins that assist in the late maturation steps of the functional core of the 30S ribosomal subunit. Helps release RbfA from mature subunits. May play a role in the assembly of ribosomal proteins into the subunit. Circularly permuted GTPase that catalyzes slow GTP hydrolysis, GTPase activity is stimulated by the 30S ribosomal subunit. In Gemmatimonas aurantiaca (strain DSM 14586 / JCM 11422 / NBRC 100505 / T-27), this protein is Small ribosomal subunit biogenesis GTPase RsgA.